The following is a 242-amino-acid chain: 1-(5-phosphoribosyl)-5-[(5-phosphoribosylamino)methylideneamino] imidazole-4-carboxamide isomerase (242 aa).

Aspartate 8 (proton acceptor) is an active-site residue. Aspartate 129 functions as the Proton donor in the catalytic mechanism.

The protein belongs to the HisA/HisF family.

The protein resides in the cytoplasm. The enzyme catalyses 1-(5-phospho-beta-D-ribosyl)-5-[(5-phospho-beta-D-ribosylamino)methylideneamino]imidazole-4-carboxamide = 5-[(5-phospho-1-deoxy-D-ribulos-1-ylimino)methylamino]-1-(5-phospho-beta-D-ribosyl)imidazole-4-carboxamide. It participates in amino-acid biosynthesis; L-histidine biosynthesis; L-histidine from 5-phospho-alpha-D-ribose 1-diphosphate: step 4/9. The chain is 1-(5-phosphoribosyl)-5-[(5-phosphoribosylamino)methylideneamino] imidazole-4-carboxamide isomerase from Dictyoglomus turgidum (strain DSM 6724 / Z-1310).